The following is a 294-amino-acid chain: N-acetylmuramic acid 6-phosphate etherase (294 aa).

One can recognise an SIS domain in the interval 54–217; the sequence is VTKSFEEEGR…STASMIGVGK (164 aa). The Proton donor role is filled by Glu-82. Glu-113 is a catalytic residue.

This sequence belongs to the GCKR-like family. MurNAc-6-P etherase subfamily. Homodimer.

The enzyme catalyses N-acetyl-D-muramate 6-phosphate + H2O = N-acetyl-D-glucosamine 6-phosphate + (R)-lactate. Its pathway is amino-sugar metabolism; N-acetylmuramate degradation. In terms of biological role, specifically catalyzes the cleavage of the D-lactyl ether substituent of MurNAc 6-phosphate, producing GlcNAc 6-phosphate and D-lactate. The chain is N-acetylmuramic acid 6-phosphate etherase from Bacillus mycoides (strain KBAB4) (Bacillus weihenstephanensis).